A 99-amino-acid polypeptide reads, in one-letter code: Bombyxin A-1 homolog (99 aa).

The signal sequence occupies residues 1–19 (MKTQVLFLVFALAAVMVSG). 3 disulfides stabilise this stretch: C27–C86, C39–C99, and C85–C90. A propeptide spans 48 to 76 (TPYISPENEGYGWRWLEPQRARQLDGARG) (c peptide like).

Belongs to the insulin family. As to quaternary structure, heterodimer of a B chain and an A chain linked by two disulfide bonds.

Its subcellular location is the secreted. Brain peptide responsible for activation of prothoracic glands to produce ecdysone in insects. This chain is Bombyxin A-1 homolog (SBXA1), found in Samia cynthia (Ailanthus silkmoth).